A 428-amino-acid polypeptide reads, in one-letter code: GTPase Obg (428 aa).

The Obg domain occupies 1–158 (MFVDQVKVYV…RYIVLELKVL (158 aa)). Residues 117 to 143 (ARGGRGGRGNSRFATPANPAPQLSENG) are disordered. In terms of domain architecture, OBG-type G spans 159-329 (ADVGLVGFPS…LLFEVANQLE (171 aa)). Residues 165–172 (GFPSVGKS), 190–194 (FTTLV), 212–215 (DLPG), 282–285 (NKMD), and 310–312 (SAV) each bind GTP. S172 and T192 together coordinate Mg(2+). The OCT domain occupies 350-428 (TMENEEVPFN…LLEFEFEFID (79 aa)).

It belongs to the TRAFAC class OBG-HflX-like GTPase superfamily. OBG GTPase family. Monomer. Interacts with TasA (AC P54507) in pull-down experiments. Mg(2+) serves as cofactor.

The protein localises to the cytoplasm. With respect to regulation, inhibited by GDP; less than 20 uM ppGpp stimulates the GTPase, while higher concentrations inhibit. Necessary for the transition from vegetative growth to stage 0 or stage II of sporulation, but sporulation subsequent to these stages is unaffected at 45 degrees Celsius. This ts effect is probably due solely to the E-79 mutation. Required for expression of early sporulation genes, further suggesting a role in the induction of sporulation. Depletion effects on sporulation can be partially suppressed by missense mutations in spo0A. Strains depleted for obg stop growing after about 3 hours and do not induce the sigma-B factor following ethanol stress. It cofractionates with the ribosome and upstream stress response regulators RsbR, RsbS and RsbT in size fractionation columns, suggesting the ribosome might serve as a possible mediator of the activity of obg and the stress induction of sigma-B. In glycerol gradients partially associates with ribosomes; this is stabilized by a nonhydrolyzable GTP-analog and to a lesser extent GTP and GDP. Its function is as follows. An essential GTPase which binds GTP, GDP and possibly (p)ppGpp with moderate affinity, with high nucleotide exchange rates and a fairly low GTP hydrolysis rate. Plays a role in control of the cell cycle, stress response, ribosome biogenesis and in those bacteria that undergo differentiation, in morphogenesis control. The protein is GTPase Obg of Bacillus subtilis (strain 168).